A 93-amino-acid polypeptide reads, in one-letter code: Co-chaperonin GroES (93 aa).

This sequence belongs to the GroES chaperonin family. In terms of assembly, heptamer of 7 subunits arranged in a ring. Interacts with the chaperonin GroEL.

The protein resides in the cytoplasm. In terms of biological role, together with the chaperonin GroEL, plays an essential role in assisting protein folding. The GroEL-GroES system forms a nano-cage that allows encapsulation of the non-native substrate proteins and provides a physical environment optimized to promote and accelerate protein folding. GroES binds to the apical surface of the GroEL ring, thereby capping the opening of the GroEL channel. This Streptococcus anginosus protein is Co-chaperonin GroES.